The primary structure comprises 183 residues: Translocon-associated protein subunit beta (183 aa).

Positions 1–17 are cleaved as a signal peptide; that stretch reads MRLLSFVVLALFAVTQA. Topologically, residues 18–149 are lumenal; sequence EEGARLLASK…DRRFSPHFLD (132 aa). 2 N-linked (GlcNAc...) asparagine glycosylation sites follow: Asn-88 and Asn-104. The helical transmembrane segment at 150 to 169 threads the bilayer; sequence WAAFGVMTLPSIGIPLLLWY. Residues 170 to 183 are Cytoplasmic-facing; sequence SSKRKYDTPKTKKN.

It belongs to the TRAP-beta family. Heterotetramer of TRAP-alpha, TRAP-beta, TRAP-delta and TRAP-gamma. Interacts with STING1.

The protein localises to the endoplasmic reticulum membrane. TRAP proteins are part of a complex whose function is to bind calcium to the ER membrane and thereby regulate the retention of ER resident proteins. This is Translocon-associated protein subunit beta (SSR2) from Homo sapiens (Human).